Reading from the N-terminus, the 436-residue chain is 3-ketoacyl-CoA thiolase (436 aa).

Cys99 acts as the Acyl-thioester intermediate in catalysis. Active-site proton acceptor residues include His392 and Cys422.

Belongs to the thiolase-like superfamily. Thiolase family. As to quaternary structure, heterotetramer of two alpha chains (FadJ) and two beta chains (FadI).

The protein localises to the cytoplasm. It catalyses the reaction an acyl-CoA + acetyl-CoA = a 3-oxoacyl-CoA + CoA. Its pathway is lipid metabolism; fatty acid beta-oxidation. Its function is as follows. Catalyzes the final step of fatty acid oxidation in which acetyl-CoA is released and the CoA ester of a fatty acid two carbons shorter is formed. The protein is 3-ketoacyl-CoA thiolase of Enterobacter sp. (strain 638).